The sequence spans 548 residues: Fumarate hydratase class I, aerobic (548 aa).

Residues cysteine 105, cysteine 224, and cysteine 318 each contribute to the [4Fe-4S] cluster site.

It belongs to the class-I fumarase family. Homodimer. Requires [4Fe-4S] cluster as cofactor.

It carries out the reaction (S)-malate = fumarate + H2O. It catalyses the reaction oxaloacetate = enol-oxaloacetate. It functions in the pathway carbohydrate metabolism; tricarboxylic acid cycle; (S)-malate from fumarate: step 1/1. Catalyzes the reversible hydration of fumarate to (S)-malate. Functions as an aerobic enzyme in the direction of malate formation as part of the citric acid cycle. Accounts for about 80% of the fumarase activity when the bacteria grow aerobically. To a lesser extent, also displays D-tartrate dehydratase activity in vitro, but is not able to convert (R)-malate, L-tartrate or meso-tartrate. Can also catalyze the isomerization of enol- to keto-oxaloacetate. The sequence is that of Fumarate hydratase class I, aerobic from Escherichia coli O6:H1 (strain CFT073 / ATCC 700928 / UPEC).